We begin with the raw amino-acid sequence, 457 residues long: MKQERSSGGYSGIPPTSKCLVCEHPDGGSAHFGSTSCLACAAFFRRTVSLNIQFQCKKDKNCVIFHELRMICRACRFDKCVKAGMRRECVQKRRSNKKIPKKHMNMLREDQIKMEYDECKFECSGDQTDDNSPLSIEKKSPPGLLPNDSPMMADFKFDPSDIPSTSGGSTQRLERSPSPKLAESKILSMNGEELLRFYVDQLKNSMDRRRMIFTDTALLAVIDDRGDVPFDATEPPPHSLKRQYESQRFDNLLAFDFCKCCPGFDFLSRVEKAIFFRSCSLAYCLLDIAWITVQAYPEEAAEPVLMYTDGSVCTVNNLSYGWDDEEDICAHDKKKLFLGFLGRFNDAICRPIRNLKMTHVEFAALKALCIWKLGYCEFTPSMKVIGKEHEEALLNGLHNYYDDLYGNPDETGMRIGNLILLMGTVFEMNQLIMETYKSAELFELFKLDALSKSLLTL.

A DNA-binding region (nuclear receptor) is located at residues 16-92; it reads TSKCLVCEHP…AGMRRECVQK (77 aa). NR C4-type zinc fingers lie at residues 19-40 and 56-80; these read CLVCEHPDGGSAHFGSTSCLAC and CKKDKNCVIFHELRMICRACRFDKC. Positions 125–182 are disordered; the sequence is GDQTDDNSPLSIEKKSPPGLLPNDSPMMADFKFDPSDIPSTSGGSTQRLERSPSPKLA. Positions 162–171 are enriched in polar residues; the sequence is IPSTSGGSTQ. Positions 201 to 457 constitute an NR LBD domain; that stretch reads QLKNSMDRRR…DALSKSLLTL (257 aa).

This sequence belongs to the nuclear hormone receptor family.

It is found in the nucleus. In terms of biological role, orphan nuclear receptor. The protein is Nuclear hormone receptor family member nhr-20 (nhr-20) of Caenorhabditis elegans.